The primary structure comprises 295 residues: uncharacterized protein (295 aa).

Disordered stretches follow at residues 33–52 (VDAPPASQIPGLSNLGDSHS) and 180–295 (LSKA…AELK). Residue serine 50 is modified to Phosphoserine. Polar residues-rich tracts occupy residues 205–217 (QKNSSPTNFSKLI) and 241–251 (TSRASVLSQSP). Over residues 267–276 (EASEGPEDTP) the composition is skewed to acidic residues. A compositionally biased stretch (low complexity) spans 277–289 (ESSQSPEESVSAS).

This is an uncharacterized protein from Homo sapiens (Human).